A 107-amino-acid polypeptide reads, in one-letter code: Nucleoid-associated protein Xfasm12_1216 (107 aa).

The protein belongs to the YbaB/EbfC family. In terms of assembly, homodimer.

It localises to the cytoplasm. The protein resides in the nucleoid. In terms of biological role, binds to DNA and alters its conformation. May be involved in regulation of gene expression, nucleoid organization and DNA protection. The polypeptide is Nucleoid-associated protein Xfasm12_1216 (Xylella fastidiosa (strain M12)).